We begin with the raw amino-acid sequence, 85 residues long: Large ribosomal subunit protein bL27 (85 aa).

The protein belongs to the bacterial ribosomal protein bL27 family.

The polypeptide is Large ribosomal subunit protein bL27 (Sodalis glossinidius (strain morsitans)).